The chain runs to 211 residues: Uracil phosphoribosyltransferase (211 aa).

5-phospho-alpha-D-ribose 1-diphosphate-binding positions include Arg-78, Arg-103, and Asp-130–Thr-138. Uracil-binding positions include Ile-195 and Gly-200–Ala-202. Asp-201 is a 5-phospho-alpha-D-ribose 1-diphosphate binding site.

The protein belongs to the UPRTase family. Requires Mg(2+) as cofactor.

The enzyme catalyses UMP + diphosphate = 5-phospho-alpha-D-ribose 1-diphosphate + uracil. Its pathway is pyrimidine metabolism; UMP biosynthesis via salvage pathway; UMP from uracil: step 1/1. With respect to regulation, allosterically activated by GTP. In terms of biological role, catalyzes the conversion of uracil and 5-phospho-alpha-D-ribose 1-diphosphate (PRPP) to UMP and diphosphate. In Paenarthrobacter aurescens (strain TC1), this protein is Uracil phosphoribosyltransferase.